We begin with the raw amino-acid sequence, 445 residues long: Bifunctional protein GlmU (445 aa).

The segment at 1-218 (MRALVLAAGK…LLEITGVNTR (218 aa)) is pyrophosphorylase. Residues 6 to 9 (LAAG), K20, Q69, 74 to 75 (GT), 96 to 98 (YGD), G134, E147, N162, and N216 contribute to the UDP-N-acetyl-alpha-D-glucosamine site. Residue D98 participates in Mg(2+) binding. A Mg(2+)-binding site is contributed by N216. Residues 219 to 239 (KTLVWLEEQLRMRKIEELLEN) are linker. Residues 240–445 (GVTILDPATT…GWVLKKRKEE (206 aa)) are N-acetyltransferase. 2 residues coordinate UDP-N-acetyl-alpha-D-glucosamine: R321 and K339. H351 serves as the catalytic Proton acceptor. Residues Y354 and N365 each coordinate UDP-N-acetyl-alpha-D-glucosamine. Acetyl-CoA-binding positions include A368, 374–375 (NY), S393, A411, and R428.

This sequence in the N-terminal section; belongs to the N-acetylglucosamine-1-phosphate uridyltransferase family. It in the C-terminal section; belongs to the transferase hexapeptide repeat family. As to quaternary structure, homotrimer. It depends on Mg(2+) as a cofactor.

Its subcellular location is the cytoplasm. It catalyses the reaction alpha-D-glucosamine 1-phosphate + acetyl-CoA = N-acetyl-alpha-D-glucosamine 1-phosphate + CoA + H(+). The catalysed reaction is N-acetyl-alpha-D-glucosamine 1-phosphate + UTP + H(+) = UDP-N-acetyl-alpha-D-glucosamine + diphosphate. It participates in nucleotide-sugar biosynthesis; UDP-N-acetyl-alpha-D-glucosamine biosynthesis; N-acetyl-alpha-D-glucosamine 1-phosphate from alpha-D-glucosamine 6-phosphate (route II): step 2/2. It functions in the pathway nucleotide-sugar biosynthesis; UDP-N-acetyl-alpha-D-glucosamine biosynthesis; UDP-N-acetyl-alpha-D-glucosamine from N-acetyl-alpha-D-glucosamine 1-phosphate: step 1/1. Its pathway is bacterial outer membrane biogenesis; LPS lipid A biosynthesis. Functionally, catalyzes the last two sequential reactions in the de novo biosynthetic pathway for UDP-N-acetylglucosamine (UDP-GlcNAc). The C-terminal domain catalyzes the transfer of acetyl group from acetyl coenzyme A to glucosamine-1-phosphate (GlcN-1-P) to produce N-acetylglucosamine-1-phosphate (GlcNAc-1-P), which is converted into UDP-GlcNAc by the transfer of uridine 5-monophosphate (from uridine 5-triphosphate), a reaction catalyzed by the N-terminal domain. The protein is Bifunctional protein GlmU of Thermotoga sp. (strain RQ2).